The primary structure comprises 72 residues: Translation initiation factor IF-1 (72 aa).

Residues 1–72 form the S1-like domain; the sequence is MAKEGAIEVE…TRGRIVYRYK (72 aa).

Belongs to the IF-1 family. Component of the 30S ribosomal translation pre-initiation complex which assembles on the 30S ribosome in the order IF-2 and IF-3, IF-1 and N-formylmethionyl-tRNA(fMet); mRNA recruitment can occur at any time during PIC assembly.

The protein resides in the cytoplasm. One of the essential components for the initiation of protein synthesis. Stabilizes the binding of IF-2 and IF-3 on the 30S subunit to which N-formylmethionyl-tRNA(fMet) subsequently binds. Helps modulate mRNA selection, yielding the 30S pre-initiation complex (PIC). Upon addition of the 50S ribosomal subunit IF-1, IF-2 and IF-3 are released leaving the mature 70S translation initiation complex. The sequence is that of Translation initiation factor IF-1 from Corynebacterium efficiens (strain DSM 44549 / YS-314 / AJ 12310 / JCM 11189 / NBRC 100395).